A 258-amino-acid polypeptide reads, in one-letter code: MSLIDPRAIIDPSATLAPDVRVGPWTLIGPHVHIGEGTEIGPHVIVRGPTWIGRHNRIFQFSTIGEDTPDLKYKGEPTRLVIGDHNVIREGVTIHRGTVQDRSETTIGDHNLIMAYVHIGHDSVMGSHCILVNNASLAGHVHVGDWAILSGYTLIHQHCQIGAHSFVGMGSGVSKDVPAFVTVLGSPAQARSMNFEGMRRRGFSPEAMNALRRAYKVVYRQGLTVEQALVELEESAKQFPEVAIFRDSVRASTRGITR.

Belongs to the transferase hexapeptide repeat family. LpxA subfamily. As to quaternary structure, homotrimer.

Its subcellular location is the cytoplasm. It carries out the reaction a (3R)-hydroxyacyl-[ACP] + UDP-N-acetyl-alpha-D-glucosamine = a UDP-3-O-[(3R)-3-hydroxyacyl]-N-acetyl-alpha-D-glucosamine + holo-[ACP]. The protein operates within glycolipid biosynthesis; lipid IV(A) biosynthesis; lipid IV(A) from (3R)-3-hydroxytetradecanoyl-[acyl-carrier-protein] and UDP-N-acetyl-alpha-D-glucosamine: step 1/6. Involved in the biosynthesis of lipid A, a phosphorylated glycolipid that anchors the lipopolysaccharide to the outer membrane of the cell. The chain is Acyl-[acyl-carrier-protein]--UDP-N-acetylglucosamine O-acyltransferase from Azotobacter vinelandii (strain DJ / ATCC BAA-1303).